A 221-amino-acid polypeptide reads, in one-letter code: Translation initiation factor 6 (221 aa).

The protein belongs to the eIF-6 family.

In terms of biological role, binds to the 50S ribosomal subunit and prevents its association with the 30S ribosomal subunit to form the 70S initiation complex. This is Translation initiation factor 6 from Methanosphaerula palustris (strain ATCC BAA-1556 / DSM 19958 / E1-9c).